The sequence spans 446 residues: Baeyer-Villiger oxidase mdpL (446 aa).

It belongs to the AflY oxidoreductase family. The cofactor is NADPH.

It functions in the pathway secondary metabolite biosynthesis. Functionally, baeyer-Villiger oxidase; part of the gene cluster that mediates the biosynthesis of monodictyphenone, a prenyl xanthone derivative. The pathway begins with the synthesis of atrochrysone thioester by the polyketide synthase (PKS) mdpG. The atrochrysone carboxyl ACP thioesterase mdpF then breaks the thioester bond and releases the atrochrysone carboxylic acid from mdpG. The atrochrysone carboxylic acid is then converted to atrochrysone which is further transformed into emodin anthrone. The next step is performed by the anthrone oxygenase mdpH that catalyzes the oxidation of emodinanthrone to emodin. Emodin is further modified to yield monodictyphenone via several steps involving mdpB, mdpC mdpJ, mdpK and mdpL. These enzymes with xptA, xptB and xptC are also proposed to be involved in the synthesis of shamixanthone from emodin. Especially, direct reduction of emodin by the short chain dehydrogenase mdpC followed by dehydration catalyzed by the scytalone dehydratase-like protein mdpB gives loss of oxygen and formation of chrysophanol intermediate in two simple steps. This Emericella nidulans (strain FGSC A4 / ATCC 38163 / CBS 112.46 / NRRL 194 / M139) (Aspergillus nidulans) protein is Baeyer-Villiger oxidase mdpL.